The sequence spans 208 residues: Uracil phosphoribosyltransferase (208 aa).

5-phospho-alpha-D-ribose 1-diphosphate is bound by residues Arg78, Arg103, and 130–138 (DPMLATGGS). Uracil-binding positions include Ile193 and 198 to 200 (GDA). Residue Asp199 coordinates 5-phospho-alpha-D-ribose 1-diphosphate.

The protein belongs to the UPRTase family. Mg(2+) serves as cofactor.

The enzyme catalyses UMP + diphosphate = 5-phospho-alpha-D-ribose 1-diphosphate + uracil. It participates in pyrimidine metabolism; UMP biosynthesis via salvage pathway; UMP from uracil: step 1/1. With respect to regulation, allosterically activated by GTP. Its function is as follows. Catalyzes the conversion of uracil and 5-phospho-alpha-D-ribose 1-diphosphate (PRPP) to UMP and diphosphate. The polypeptide is Uracil phosphoribosyltransferase (Sodalis glossinidius (strain morsitans)).